The primary structure comprises 395 residues: Isoafricanol synthase (395 aa).

The Mg(2+) site is built by aspartate 95, asparagine 246, serine 250, and glutamate 254. Residues 346 to 357 show a composition bias toward basic and acidic residues; that stretch reads TEAVSGGRERPW. The disordered stretch occupies residues 346–395; the sequence is TEAVSGGRERPWARLTGAEDLIRAGRGAPPPPGSGPDTRQPMPSEPSQLA.

The protein belongs to the terpene synthase family. Mg(2+) is required as a cofactor.

The catalysed reaction is (2E,6E)-farnesyl diphosphate + H2O = (+)-isoafricanol + diphosphate. Functionally, catalyzes the cyclization of farnesyl diphosphate (FPP) to isoafricanol. In Streptomyces malaysiensis, this protein is Isoafricanol synthase.